We begin with the raw amino-acid sequence, 690 residues long: Glycine--tRNA ligase beta subunit (690 aa).

This sequence belongs to the class-II aminoacyl-tRNA synthetase family. In terms of assembly, tetramer of two alpha and two beta subunits.

The protein resides in the cytoplasm. The catalysed reaction is tRNA(Gly) + glycine + ATP = glycyl-tRNA(Gly) + AMP + diphosphate. The chain is Glycine--tRNA ligase beta subunit from Lactobacillus gasseri (strain ATCC 33323 / DSM 20243 / BCRC 14619 / CIP 102991 / JCM 1131 / KCTC 3163 / NCIMB 11718 / NCTC 13722 / AM63).